The sequence spans 861 residues: MEINFKVLSKPIRGSFPSFSPKVSSGASRNKICFPSQHSTGLKFGSQERSWDISSTPKSRVRKDERMKHSSAISAVLTDDNSTMAPLEEDVKTENIGLLNLDPTLEPYLDHFRHRMKRYVDQKMLIEKYEGPLEEFAQGYLKFGFNREDGCIVYREWAPAAQEDEVIGDFNGWNGSNHMMEKDQFGVWSIRIPDVDSKPVIPHNSRVKFRFKHGNGVWVDRIPAWIKYATADATKFAAPYDGVYWDPPPSERYHFKYPRPPKPRAPRIYEAHVGMSSSEPRVNSYREFADDVLPRIKANNYNTVQLMAIMEHSYYGSFGYHVTNFFAVSSRYGNPEDLKYLIDKAHSLGLQVLVDVVHSHASNNVTDGLNGFDIGQGSQESYFHAGERGYHKLWDSRLFNYANWEVLRFLLSNLRWWLEEYNFDGFRFDGITSMLYVHHGINMGFTGNYNEYFSEATDVDAVVYLMLANNLIHKIFPDATVIAEDVSGMPGLGRPVSEGGIGFDYRLAMAIPDKWIDYLKNKNDEDWSMKEVTSSLTNRRYTEKCIAYAESHDQSIVGDKTIAFLLMDKEMYSGMSCLTDASPVVDRGIALHKMIHFFTMALGGEGYLNFMGNEFGHPEWIDFPREGNNWSYDKCRRQWNLADSEHLRYKFMNAFDRAMNSLDEKFSFLASGKQIVSSMDDDNKVVVFERGDLVFVFNFHPKNTYEGYKVGCDLPGKYRVALDSDAWEFGGHGRTGHDVDHFTSPEGIPGVPETNFNGRQIPSKCCLLREHVWLITELMNACQKLKITRQTFVVSYYQQPISRRVTRNLKIRYLQISVTLTNACQKLKFTRQTFLVSYYQQPILRRVTRKLKDSLSTNIST.

Residues tryptophan 173 and lysine 208 each coordinate (1,4-alpha-D-glucosyl)n. Aspartate 429 functions as the Nucleophile in the catalytic mechanism. The Proton donor role is filled by glutamate 484.

Belongs to the glycosyl hydrolase 13 family. GlgB subfamily. As to quaternary structure, monomer.

The protein localises to the plastid. It localises to the chloroplast. It is found in the amyloplast. The enzyme catalyses Transfers a segment of a (1-&gt;4)-alpha-D-glucan chain to a primary hydroxy group in a similar glucan chain.. Its pathway is glycan biosynthesis; starch biosynthesis. Catalyzes the formation of the alpha-1,6-glucosidic linkages in starch by scission of a 1,4-alpha-linked oligosaccharide from growing alpha-1,4-glucan chains and the subsequent attachment of the oligosaccharide to the alpha-1,6 position. The sequence is that of 1,4-alpha-glucan-branching enzyme (SBE1) from Solanum tuberosum (Potato).